Consider the following 420-residue polypeptide: Na(+)/H(+) antiporter NhaA (420 aa).

The next 10 helical transmembrane spans lie at threonine 34–glycine 54, leucine 69–leucine 89, leucine 107–phenylalanine 127, isoleucine 141–leucine 161, phenylalanine 168–threonine 190, isoleucine 194–phenylalanine 213, tryptophan 271–glycine 291, proline 301–glycine 321, isoleucine 342–leucine 362, and alanine 374–histidine 394.

This sequence belongs to the NhaA Na(+)/H(+) (TC 2.A.33) antiporter family.

It is found in the cell membrane. The catalysed reaction is Na(+)(in) + 2 H(+)(out) = Na(+)(out) + 2 H(+)(in). Functionally, na(+)/H(+) antiporter that extrudes sodium in exchange for external protons. The protein is Na(+)/H(+) antiporter NhaA of Cutibacterium acnes (strain DSM 16379 / KPA171202) (Propionibacterium acnes).